We begin with the raw amino-acid sequence, 213 residues long: Ribonuclease HII (213 aa).

An RNase H type-2 domain is found at 1–213 (MKIIGIDEAG…SWKTAQKFIQ (213 aa)). Positions 7, 8, and 105 each coordinate a divalent metal cation.

It belongs to the RNase HII family. The cofactor is Mn(2+). It depends on Mg(2+) as a cofactor.

It is found in the cytoplasm. It carries out the reaction Endonucleolytic cleavage to 5'-phosphomonoester.. Endonuclease that specifically degrades the RNA of RNA-DNA hybrids. The protein is Ribonuclease HII of Methanococcoides burtonii (strain DSM 6242 / NBRC 107633 / OCM 468 / ACE-M).